A 212-amino-acid polypeptide reads, in one-letter code: Peptide methionine sulfoxide reductase MsrA (212 aa).

Residue C52 is part of the active site.

This sequence belongs to the MsrA Met sulfoxide reductase family.

It catalyses the reaction L-methionyl-[protein] + [thioredoxin]-disulfide + H2O = L-methionyl-(S)-S-oxide-[protein] + [thioredoxin]-dithiol. It carries out the reaction [thioredoxin]-disulfide + L-methionine + H2O = L-methionine (S)-S-oxide + [thioredoxin]-dithiol. Has an important function as a repair enzyme for proteins that have been inactivated by oxidation. Catalyzes the reversible oxidation-reduction of methionine sulfoxide in proteins to methionine. In Escherichia coli O127:H6 (strain E2348/69 / EPEC), this protein is Peptide methionine sulfoxide reductase MsrA.